The following is a 238-amino-acid chain: tRNA (guanine-N(7)-)-methyltransferase (238 aa).

Glutamate 68, glutamate 93, aspartate 120, and aspartate 143 together coordinate S-adenosyl-L-methionine. Residue aspartate 143 is part of the active site. Residues lysine 147, aspartate 179, and 216 to 219 (TKFE) contribute to the substrate site.

It belongs to the class I-like SAM-binding methyltransferase superfamily. TrmB family.

It carries out the reaction guanosine(46) in tRNA + S-adenosyl-L-methionine = N(7)-methylguanosine(46) in tRNA + S-adenosyl-L-homocysteine. The protein operates within tRNA modification; N(7)-methylguanine-tRNA biosynthesis. Functionally, catalyzes the formation of N(7)-methylguanine at position 46 (m7G46) in tRNA. This chain is tRNA (guanine-N(7)-)-methyltransferase, found in Shewanella amazonensis (strain ATCC BAA-1098 / SB2B).